We begin with the raw amino-acid sequence, 833 residues long: DNA ligase (833 aa).

NAD(+) is bound by residues 35–39, 84–85, and E115; these read DADYD and SL. K117 serves as the catalytic N6-AMP-lysine intermediate. Residues R138, E175, K292, and K316 each coordinate NAD(+). Positions 410, 413, 428, and 434 each coordinate Zn(2+). The region spanning 750 to 833 is the BRCT domain; that stretch reads EKTGPLDGQT…AFLGDHGQQP (84 aa).

Belongs to the NAD-dependent DNA ligase family. LigA subfamily. The cofactor is Mg(2+). Mn(2+) is required as a cofactor.

The enzyme catalyses NAD(+) + (deoxyribonucleotide)n-3'-hydroxyl + 5'-phospho-(deoxyribonucleotide)m = (deoxyribonucleotide)n+m + AMP + beta-nicotinamide D-nucleotide.. DNA ligase that catalyzes the formation of phosphodiester linkages between 5'-phosphoryl and 3'-hydroxyl groups in double-stranded DNA using NAD as a coenzyme and as the energy source for the reaction. It is essential for DNA replication and repair of damaged DNA. The chain is DNA ligase from Xanthomonas axonopodis pv. citri (strain 306).